A 248-amino-acid chain; its full sequence is MKQIESAKNQKVKDWKKLHTKKERTKTNTFLIEGEHLVEEALKSPGIVKEILVKDETRIPSDLETGIQCYMLSEDAFSAVTETETPQQIAAVCHMPEEKLATARKVLLIDAVQDPGNLGTMIRTADAAGLDAVVLGDGTADAFNGKTLRSAQGSHFHIPVVRRNLPSYVDELKAEGVKVYGTALQNGAPYQEIPQSESFALIVGNEGAGVDAALLEKTDLNLYVPLYGQAESLNVAVAAAILVYHLRG.

Residues Arg123, Gly204, Val224, and Leu233 each contribute to the S-adenosyl-L-methionine site.

Belongs to the class IV-like SAM-binding methyltransferase superfamily. RNA methyltransferase TrmH family. In terms of assembly, homodimer.

It localises to the cytoplasm. The catalysed reaction is guanosine(2553) in 23S rRNA + S-adenosyl-L-methionine = 2'-O-methylguanosine(2553) in 23S rRNA + S-adenosyl-L-homocysteine + H(+). Its function is as follows. Specifically methylates the ribose of guanosine 2553 (G2553) in 23S rRNA. When the target G2553 is mutated, is able to methylate the ribose of adenosine, but it cannot methylate cytidine nor uridine. Modifies free 23S rRNA but not the fully assembled ribosome nor the 50S subunit, suggesting that the modification occurs early during ribosome biogenesis. This is 23S rRNA (guanosine(2553)-2'-O)-methyltransferase RlmP from Bacillus subtilis (strain 168).